The following is a 120-amino-acid chain: Small ribosomal subunit protein uS13 (120 aa).

Residues 93–120 (RKGLPVRGQTTKNNARTRKGKKKTVGSK) are disordered. Residues 107–120 (ARTRKGKKKTVGSK) are compositionally biased toward basic residues.

It belongs to the universal ribosomal protein uS13 family. As to quaternary structure, part of the 30S ribosomal subunit. Forms a loose heterodimer with protein S19. Forms two bridges to the 50S subunit in the 70S ribosome.

In terms of biological role, located at the top of the head of the 30S subunit, it contacts several helices of the 16S rRNA. In the 70S ribosome it contacts the 23S rRNA (bridge B1a) and protein L5 of the 50S subunit (bridge B1b), connecting the 2 subunits; these bridges are implicated in subunit movement. Contacts the tRNAs in the A and P-sites. The polypeptide is Small ribosomal subunit protein uS13 (Helicobacter pylori (strain P12)).